The primary structure comprises 400 residues: Enoyl-[acyl-carrier-protein] reductase [NADH] (400 aa).

NAD(+) is bound by residues 48 to 53 (GASTGY), 74 to 75 (FE), 111 to 112 (DA), and 139 to 140 (LA). Y225 contacts substrate. The active-site Proton donor is Y235. Residues K244 and 273–275 (VVT) contribute to the NAD(+) site.

The protein belongs to the TER reductase family. Monomer.

It carries out the reaction a 2,3-saturated acyl-[ACP] + NAD(+) = a (2E)-enoyl-[ACP] + NADH + H(+). It functions in the pathway lipid metabolism; fatty acid biosynthesis. Functionally, involved in the final reduction of the elongation cycle of fatty acid synthesis (FAS II). Catalyzes the reduction of a carbon-carbon double bond in an enoyl moiety that is covalently linked to an acyl carrier protein (ACP). This is Enoyl-[acyl-carrier-protein] reductase [NADH] from Burkholderia cenocepacia (strain ATCC BAA-245 / DSM 16553 / LMG 16656 / NCTC 13227 / J2315 / CF5610) (Burkholderia cepacia (strain J2315)).